An 89-amino-acid chain; its full sequence is Protein FAM25A (89 aa).

The protein belongs to the FAM25 family.

The chain is Protein FAM25A from Mus musculus (Mouse).